Reading from the N-terminus, the 452-residue chain is Chromosomal replication initiator protein DnaA (452 aa).

The interval 1–72 (MPDMLTLWTD…LVEYAYQAAH (72 aa)) is domain I, interacts with DnaA modulators. Residues 72–114 (HEDIQPVLILENERQQQATLKAKTAPVAAGEPVEPTPTFMKET) form a domain II region. Residues 115–331 (ALNSRYTFDT…GALARVQAYS (217 aa)) form a domain III, AAA+ region region. 4 residues coordinate ATP: glycine 159, glycine 161, lysine 162, and threonine 163. The interval 332-452 (QLMHQPIATD…IDSLKDDLRR (121 aa)) is domain IV, binds dsDNA.

It belongs to the DnaA family. Oligomerizes as a right-handed, spiral filament on DNA at oriC.

Its subcellular location is the cytoplasm. Its function is as follows. Plays an essential role in the initiation and regulation of chromosomal replication. ATP-DnaA binds to the origin of replication (oriC) to initiate formation of the DNA replication initiation complex once per cell cycle. Binds the DnaA box (a 9 base pair repeat at the origin) and separates the double-stranded (ds)DNA. Forms a right-handed helical filament on oriC DNA; dsDNA binds to the exterior of the filament while single-stranded (ss)DNA is stabiized in the filament's interior. The ATP-DnaA-oriC complex binds and stabilizes one strand of the AT-rich DNA unwinding element (DUE), permitting loading of DNA polymerase. After initiation quickly degrades to an ADP-DnaA complex that is not apt for DNA replication. Binds acidic phospholipids. The protein is Chromosomal replication initiator protein DnaA of Levilactobacillus brevis (strain ATCC 367 / BCRC 12310 / CIP 105137 / JCM 1170 / LMG 11437 / NCIMB 947 / NCTC 947) (Lactobacillus brevis).